The following is a 216-amino-acid chain: UPF0323 lipoprotein HPG27_212 (216 aa).

An N-terminal signal peptide occupies residues 1–27; that stretch reads MKKPYRKISDYAIVGGLSALVMVSIVG. C28 carries the N-palmitoyl cysteine lipid modification. A lipid anchor (S-diacylglycerol cysteine) is attached at C28. Residues 159-170 show a composition bias toward polar residues; that stretch reads QRTYKSPQAYQR. The segment at 159-216 is disordered; sequence QRTYKSPQAYQRSQNSFSKSAPSASSMGGASKGQSGFFGSSRPTSSPAVSSGTRGFNS. Residues 171 to 209 are compositionally biased toward low complexity; it reads SQNSFSKSAPSASSMGGASKGQSGFFGSSRPTSSPAVSS.

The protein belongs to the UPF0323 family.

The protein localises to the cell membrane. This chain is UPF0323 lipoprotein HPG27_212, found in Helicobacter pylori (strain G27).